A 625-amino-acid polypeptide reads, in one-letter code: Glutamine--fructose-6-phosphate aminotransferase [isomerizing] (625 aa).

Cys-2 serves as the catalytic Nucleophile; for GATase activity. Residues 2–229 (CGLVGYVGQR…QDQAVVITAD (228 aa)) form the Glutamine amidotransferase type-2 domain. SIS domains follow at residues 298–437 (SDQE…ARGT) and 470–615 (LAYR…VDKP). Lys-620 (for Fru-6P isomerization activity) is an active-site residue.

As to quaternary structure, homodimer.

The protein resides in the cytoplasm. It catalyses the reaction D-fructose 6-phosphate + L-glutamine = D-glucosamine 6-phosphate + L-glutamate. Catalyzes the first step in hexosamine metabolism, converting fructose-6P into glucosamine-6P using glutamine as a nitrogen source. In Mycobacterium leprae (strain TN), this protein is Glutamine--fructose-6-phosphate aminotransferase [isomerizing].